The chain runs to 481 residues: Glutamyl-tRNA(Gln) amidotransferase subunit A (481 aa).

Residues Lys-74 and Ser-149 each act as charge relay system in the active site. The Acyl-ester intermediate role is filled by Ser-173.

The protein belongs to the amidase family. GatA subfamily. Heterotrimer of A, B and C subunits.

It carries out the reaction L-glutamyl-tRNA(Gln) + L-glutamine + ATP + H2O = L-glutaminyl-tRNA(Gln) + L-glutamate + ADP + phosphate + H(+). Functionally, allows the formation of correctly charged Gln-tRNA(Gln) through the transamidation of misacylated Glu-tRNA(Gln) in organisms which lack glutaminyl-tRNA synthetase. The reaction takes place in the presence of glutamine and ATP through an activated gamma-phospho-Glu-tRNA(Gln). The chain is Glutamyl-tRNA(Gln) amidotransferase subunit A from Francisella philomiragia subsp. philomiragia (strain ATCC 25017 / CCUG 19701 / FSC 153 / O#319-036).